Reading from the N-terminus, the 386-residue chain is Lipoyl synthase, mitochondrial (386 aa).

The [4Fe-4S] cluster site is built by Cys115, Cys120, Cys126, Cys146, Cys150, Cys153, and Ser362. Residues 131–351 form the Radical SAM core domain; it reads ETGTATATIM…QKLGMEMGFR (221 aa).

Belongs to the radical SAM superfamily. Lipoyl synthase family. It depends on [4Fe-4S] cluster as a cofactor.

The protein localises to the mitochondrion. It carries out the reaction [[Fe-S] cluster scaffold protein carrying a second [4Fe-4S](2+) cluster] + N(6)-octanoyl-L-lysyl-[protein] + 2 oxidized [2Fe-2S]-[ferredoxin] + 2 S-adenosyl-L-methionine + 4 H(+) = [[Fe-S] cluster scaffold protein] + N(6)-[(R)-dihydrolipoyl]-L-lysyl-[protein] + 4 Fe(3+) + 2 hydrogen sulfide + 2 5'-deoxyadenosine + 2 L-methionine + 2 reduced [2Fe-2S]-[ferredoxin]. It functions in the pathway protein modification; protein lipoylation via endogenous pathway; protein N(6)-(lipoyl)lysine from octanoyl-[acyl-carrier-protein]: step 2/2. Catalyzes the radical-mediated insertion of two sulfur atoms into the C-6 and C-8 positions of the octanoyl moiety bound to the lipoyl domains of lipoate-dependent enzymes, thereby converting the octanoylated domains into lipoylated derivatives. The chain is Lipoyl synthase, mitochondrial from Picea sitchensis (Sitka spruce).